The sequence spans 344 residues: tRNA N6-adenosine threonylcarbamoyltransferase (344 aa).

Fe cation-binding residues include histidine 112 and histidine 116. Residues leucine 134–glycine 138, aspartate 167, glycine 180, and asparagine 280 each bind substrate. Aspartate 308 provides a ligand contact to Fe cation.

The protein belongs to the KAE1 / TsaD family. Fe(2+) is required as a cofactor.

The protein localises to the cytoplasm. It carries out the reaction L-threonylcarbamoyladenylate + adenosine(37) in tRNA = N(6)-L-threonylcarbamoyladenosine(37) in tRNA + AMP + H(+). Required for the formation of a threonylcarbamoyl group on adenosine at position 37 (t(6)A37) in tRNAs that read codons beginning with adenine. Is involved in the transfer of the threonylcarbamoyl moiety of threonylcarbamoyl-AMP (TC-AMP) to the N6 group of A37, together with TsaE and TsaB. TsaD likely plays a direct catalytic role in this reaction. This chain is tRNA N6-adenosine threonylcarbamoyltransferase, found in Rickettsia massiliae (strain Mtu5).